A 505-amino-acid chain; its full sequence is MDLLLVEKTLLALFAAIIASIFISKLRGKRFKLPPGPVPVPIFGNWLQVGDDLNHRNLTDLAKKFGEIFLLRMGQRNLVVVSSPNLAKEVLHTQGVEFGSRTRNVVFDIFTGKGQDMVFTVYGEHWRKMRRIMTVPFFTNKVVQQYRTGWEAEAAAVVDDVKKNPKAATEGVVIRKRLQLMMYNNMFRIMFDRRFESEDDPLFVKLKMLNGERSRLAQSFEYNYGDFIPILRPFLKGYLKLCKEVKEKRFQLFKDYFVDERKKLGSTKSMDNNQLKCAIDHILDAKDKGEINEDNVLYIVENINVAAIETTLWSIEWAIAELVNHPEIQAKLRHELVSQLGPGVQVTEPDLHKLPYLQAVIKETLRLRMAIPLLVPHMNLHDAKLGGYDIPAESKILVNAWWLANNPDQWKKPEEFRPERFLEEESKVEANGNDFRYLPFGVGRRSCPGIILALPILGITIGRLVQNFELLPPPGQDKVDTTEKGGQFSLHILKHSTIVAKPRVL.

The helical transmembrane segment at 3–23 (LLLVEKTLLALFAAIIASIFI) threads the bilayer. Residues 213–218 (RSRLAQ) and Ala-306 each bind (E)-cinnamate. A heme-binding site is contributed by Cys-447.

This sequence belongs to the cytochrome P450 family. Heme serves as cofactor.

It localises to the membrane. The catalysed reaction is (E)-cinnamate + reduced [NADPH--hemoprotein reductase] + O2 = (E)-4-coumarate + oxidized [NADPH--hemoprotein reductase] + H2O + H(+). It functions in the pathway phenylpropanoid metabolism; trans-4-coumarate biosynthesis; trans-4-coumarate from trans-cinnamate: step 1/1. In terms of biological role, catalyzes the first oxidative step of the phenylpropanoid pathway in higher plants by transforming trans-cinnamate into p-coumarate. The compounds formed by this pathway are essential components for lignification, pollination, and defense against ultraviolet light, predators and pathogens. In Zinnia elegans (Garden zinnia), this protein is Trans-cinnamate 4-monooxygenase (CYP73A12).